Here is a 534-residue protein sequence, read N- to C-terminus: MGRGGKRTWYNGDRREAKRNRPNSIYNGEGRPENLVVGEKKPKRKVACLVGYCGSGYHGMQLNPPSKTIEGDLFDAFVKAGAVSSYNADDPKKVALARAARTDKGVHAAGNVISLKLIMEDEKLIEKVNEHLPPSIRLWDVIRTINSFNPRTYCESRIYEYMVPTYAFVPPKPSSILGNCIMKNSPMPAEPINKENINQLSRSLFYEEGKEFWDDYDIAAKEILSLYEQDPEGFVNPYSKRGAAALANSENNKGSEAGVSAKTNPDMDSDSSAIVNEFLKPDSVEDESAGSKIDPSYRLERALKHIEVLKLKNYRISADRLSVIRETLNQYVGVHNFHNFTVGQAFHQKNSNRVIRSFTASDPFMIGDTEWISCKVHGQSFMLHQIRKMIALAILVVRTGCPVERIQDAFKKTKINIPKGPGFGLLLESPFFKGYNEHKAPENNRDPIDFTKYEQKITAFKHAHIYDKIFLEEARKQVFHCFLSFIDSYNEEDFSYLSDIGITEKTQEVSSKLPDVLSSDEEEDSAENKDDLEG.

The segment at 1–32 (MGRGGKRTWYNGDRREAKRNRPNSIYNGEGRP) is disordered. The active-site Nucleophile is the D103. Disordered regions lie at residues 246-271 (LANSENNKGSEAGVSAKTNPDMDSDS) and 507-534 (QEVSSKLPDVLSSDEEEDSAENKDDLEG). Phosphoserine occurs at positions 518, 519, and 525.

It belongs to the tRNA pseudouridine synthase TruA family. Zn(2+) is required as a cofactor.

It is found in the nucleus. The catalysed reaction is a uridine in tRNA = a pseudouridine in tRNA. The enzyme catalyses uridine in snRNA = pseudouridine in snRNA. It carries out the reaction a uridine in mRNA = a pseudouridine in mRNA. Formation of pseudouridine at positions 27 and 28 in the anticodon stem and loop of transfer RNAs; at positions 34 and 36 of intron-containing precursor tRNA(Ile) and at position 35 in the intron-containing tRNA(Tyr). Catalyzes pseudouridylation at position 44 in U2 snRNA. Also catalyzes pseudouridylation of mRNAs. In Schizosaccharomyces pombe (strain 972 / ATCC 24843) (Fission yeast), this protein is tRNA pseudouridine synthase 1 (pus1).